The sequence spans 302 residues: Deoxyhypusine hydroxylase-B (302 aa).

HEAT-like PBS-type repeat units lie at residues Leu49–Asp75, Val82–Val108, Met171–Lys200, Leu204–Asn230, and Val237–Asp263. Positions 51, 52, 84, and 85 each coordinate Fe cation. His206, Glu207, His239, and Glu240 together coordinate Fe cation.

The protein belongs to the deoxyhypusine hydroxylase family. It depends on Fe(2+) as a cofactor.

The catalysed reaction is [eIF5A protein]-deoxyhypusine + AH2 + O2 = [eIF5A protein]-hypusine + A + H2O. It participates in protein modification; eIF5A hypusination. In terms of biological role, catalyzes the hydroxylation of the N(6)-(4-aminobutyl)-L-lysine intermediate to form hypusine, an essential post-translational modification only found in mature eIF-5A factor. The protein is Deoxyhypusine hydroxylase-B of Oryza sativa subsp. japonica (Rice).